The chain runs to 501 residues: MTATSAAELLDYDDVVARFEPVMGMEVHVELSTATKMFCGCANAFGAEPNTQVCPVCLGLPGSLPVLNQQAVESAIRIGLALNCEIVPWCRFARKNYFYPDQPKNYQISQYDEPIAINGYLDVPLDDGSTWRVEIERAHMEEDTGKLTHLGSDTGRIAGATNSLADYNRAGVPLIEIVTRPIEGAGVKAPEIARAYVTALRDLLRALGVSDVRMDQGSMRCDANLSLKPIGQAEFGTRTETKNVNSLKSVEVAVRYEMRRQAAVLTSGGQVHQETRHFHEDGYTSPGRSKETAEDYRYFPEPDLEPVAPDAEFVEHLRQSLPELPWLRRNRIQQEWGISDEVMRDLVNNGAIDLVAATVEQGASSEAARAWWGNFLVQKANESGVELDALPITPAQVAAVVKLVDDGKLSNKLARQVVEGVLAGEGEPAQVMADRGLEVVRDDSALQAAVDEALAANPGIVEKIRGGKVQAAGAIVGAVMKATKGQADAARVRELVLAACS.

Belongs to the GatB/GatE family. GatB subfamily. As to quaternary structure, heterotrimer of A, B and C subunits.

It catalyses the reaction L-glutamyl-tRNA(Gln) + L-glutamine + ATP + H2O = L-glutaminyl-tRNA(Gln) + L-glutamate + ADP + phosphate + H(+). The catalysed reaction is L-aspartyl-tRNA(Asn) + L-glutamine + ATP + H2O = L-asparaginyl-tRNA(Asn) + L-glutamate + ADP + phosphate + 2 H(+). Allows the formation of correctly charged Asn-tRNA(Asn) or Gln-tRNA(Gln) through the transamidation of misacylated Asp-tRNA(Asn) or Glu-tRNA(Gln) in organisms which lack either or both of asparaginyl-tRNA or glutaminyl-tRNA synthetases. The reaction takes place in the presence of glutamine and ATP through an activated phospho-Asp-tRNA(Asn) or phospho-Glu-tRNA(Gln). This is Aspartyl/glutamyl-tRNA(Asn/Gln) amidotransferase subunit B from Mycobacterium sp. (strain KMS).